The following is a 105-amino-acid chain: Thiosulfate sulfurtransferase GlpE (105 aa).

In terms of domain architecture, Rhodanese spans 16-104; it reads DKEDVVIADI…WEAAYSEKVE (89 aa). Cys-64 serves as the catalytic Cysteine persulfide intermediate.

The protein belongs to the GlpE family.

The protein localises to the cytoplasm. The enzyme catalyses thiosulfate + hydrogen cyanide = thiocyanate + sulfite + 2 H(+). It catalyses the reaction thiosulfate + [thioredoxin]-dithiol = [thioredoxin]-disulfide + hydrogen sulfide + sulfite + 2 H(+). Transferase that catalyzes the transfer of sulfur from thiosulfate to thiophilic acceptors such as cyanide or dithiols. May function in a CysM-independent thiosulfate assimilation pathway by catalyzing the conversion of thiosulfate to sulfite, which can then be used for L-cysteine biosynthesis. The polypeptide is Thiosulfate sulfurtransferase GlpE (Pseudoalteromonas translucida (strain TAC 125)).